Consider the following 511-residue polypeptide: ATP synthase subunit alpha (511 aa).

An ATP-binding site is contributed by 169-176 (GDRQTGKT).

The protein belongs to the ATPase alpha/beta chains family. As to quaternary structure, F-type ATPases have 2 components, CF(1) - the catalytic core - and CF(0) - the membrane proton channel. CF(1) has five subunits: alpha(3), beta(3), gamma(1), delta(1), epsilon(1). CF(0) has three main subunits: a(1), b(2) and c(9-12). The alpha and beta chains form an alternating ring which encloses part of the gamma chain. CF(1) is attached to CF(0) by a central stalk formed by the gamma and epsilon chains, while a peripheral stalk is formed by the delta and b chains.

The protein localises to the cell inner membrane. It catalyses the reaction ATP + H2O + 4 H(+)(in) = ADP + phosphate + 5 H(+)(out). Functionally, produces ATP from ADP in the presence of a proton gradient across the membrane. The alpha chain is a regulatory subunit. The chain is ATP synthase subunit alpha from Janthinobacterium sp. (strain Marseille) (Minibacterium massiliensis).